We begin with the raw amino-acid sequence, 95 residues long: Aspartyl/glutamyl-tRNA(Asn/Gln) amidotransferase subunit C (95 aa).

The protein belongs to the GatC family. Heterotrimer of A, B and C subunits.

The catalysed reaction is L-glutamyl-tRNA(Gln) + L-glutamine + ATP + H2O = L-glutaminyl-tRNA(Gln) + L-glutamate + ADP + phosphate + H(+). It catalyses the reaction L-aspartyl-tRNA(Asn) + L-glutamine + ATP + H2O = L-asparaginyl-tRNA(Asn) + L-glutamate + ADP + phosphate + 2 H(+). Allows the formation of correctly charged Asn-tRNA(Asn) or Gln-tRNA(Gln) through the transamidation of misacylated Asp-tRNA(Asn) or Glu-tRNA(Gln) in organisms which lack either or both of asparaginyl-tRNA or glutaminyl-tRNA synthetases. The reaction takes place in the presence of glutamine and ATP through an activated phospho-Asp-tRNA(Asn) or phospho-Glu-tRNA(Gln). The chain is Aspartyl/glutamyl-tRNA(Asn/Gln) amidotransferase subunit C from Campylobacter lari (strain RM2100 / D67 / ATCC BAA-1060).